The primary structure comprises 227 residues: Germin-like protein 3-5 (227 aa).

The first 29 residues, 1-29 (MEYGFKAAGLVFVVLLLQQAPVLIRATDA), serve as a signal peptide directing secretion. An intrachain disulfide couples Cys36 to Cys51. The Cupin type-1 domain maps to 65–217 (SKIATGGDVN…ALRVDAGVVE (153 aa)). N-linked (GlcNAc...) asparagine glycans are attached at residues Asn78 and Asn81. 4 residues coordinate Mn(2+): His114, His116, Glu121, and His163.

Belongs to the germin family. As to quaternary structure, oligomer (believed to be a pentamer but probably hexamer).

The protein resides in the secreted. It is found in the extracellular space. The protein localises to the apoplast. Functionally, may play a role in plant defense. Probably has no oxalate oxidase activity even if the active site is conserved. The sequence is that of Germin-like protein 3-5 from Oryza sativa subsp. japonica (Rice).